Here is a 382-residue protein sequence, read N- to C-terminus: GTPase Obg (382 aa).

Residues 2 to 161 (VKFADESKIR…REIIVELNII (160 aa)) form the Obg domain. The OBG-type G domain maps to 162-328 (ADIGLVGFPN…VKKAFIRLAD (167 aa)). Residues 168–175 (GFPNAGKS), 193–197 (FTTKI), 215–218 (DIPG), 282–285 (TKLD), and 309–311 (SLY) contribute to the GTP site. Mg(2+) contacts are provided by S175 and T195. A disordered region spans residues 360 to 382 (EEKNDDEHFGATVSLSRKRKPKK).

The protein belongs to the TRAFAC class OBG-HflX-like GTPase superfamily. OBG GTPase family. In terms of assembly, monomer. The cofactor is Mg(2+).

The protein resides in the cytoplasm. In terms of biological role, an essential GTPase which binds GTP, GDP and possibly (p)ppGpp with moderate affinity, with high nucleotide exchange rates and a fairly low GTP hydrolysis rate. Plays a role in control of the cell cycle, stress response, ribosome biogenesis and in those bacteria that undergo differentiation, in morphogenesis control. This chain is GTPase Obg, found in Treponema denticola (strain ATCC 35405 / DSM 14222 / CIP 103919 / JCM 8153 / KCTC 15104).